Consider the following 225-residue polypeptide: Large ribosomal subunit protein mL58 (225 aa).

The disordered stretch occupies residues 106-138; sequence PQAPITTPESSSTDAAAADQHGDLPPVLYNPTK. The segment covering 109-119 has biased composition (polar residues); sequence PITTPESSSTD.

It belongs to the mitochondrion-specific ribosomal protein mL58 family. As to quaternary structure, component of the mitochondrial large ribosomal subunit (mt-LSU). Mature N.crassa 74S mitochondrial ribosomes consist of a small (37S) and a large (54S) subunit. The 37S small subunit contains a 16S ribosomal RNA (16S mt-rRNA) and 32 different proteins. The 54S large subunit contains a 23S rRNA (23S mt-rRNA) and 42 different proteins.

The protein resides in the mitochondrion. Its function is as follows. Component of the mitochondrial ribosome (mitoribosome), a dedicated translation machinery responsible for the synthesis of mitochondrial genome-encoded proteins, including at least some of the essential transmembrane subunits of the mitochondrial respiratory chain. The mitoribosomes are attached to the mitochondrial inner membrane and translation products are cotranslationally integrated into the membrane. This Neurospora crassa (strain ATCC 24698 / 74-OR23-1A / CBS 708.71 / DSM 1257 / FGSC 987) protein is Large ribosomal subunit protein mL58 (mrpl20).